Reading from the N-terminus, the 124-residue chain is Non-structural protein 2 (124 aa).

The short motif at 121 to 124 (DLNP) is the DLNP; interaction with MAP1B element.

The protein belongs to the pneumovirus non-structural protein 2 family. In terms of assembly, monomer (instable). Homomultimer. Heteromultimer with NS1. Interacts with host RIGI (via N-terminus); this interaction prevents host signaling pathway involved in interferon production. Interacts with host MAP1B/microtubule-associated protein 1B.

It is found in the host mitochondrion. Its function is as follows. Plays a major role in antagonizing the type I IFN-mediated antiviral response. Acts cooperatively with NS1 to repress activation and nuclear translocation of host IFN-regulatory factor IRF3. Interacts with the host cytoplasmic sensor of viral nucleic acids RIGI and prevents the interaction with its downstream partner MAVS. Together with NS2, participates in the proteasomal degradation of host STAT2, IRF3, IRF7, TBK1 and RIGI through a NS-degradasome involving CUL2 and Elongin-C. The degradasome requires an intact mitochondrial MAVS. Induces host SOCS1 expression. Induces activation of NF-kappa-B. Suppresses premature apoptosis by an NF-kappa-B-dependent, interferon-independent mechanism promoting continued viral replication. This Human respiratory syncytial virus B (strain 18537) protein is Non-structural protein 2 (1B).